The chain runs to 126 residues: Protein ApaG (126 aa).

The region spanning 2 to 126 (SDPRYQIDVS…FRLAVPGALH (125 aa)) is the ApaG domain.

In Ectopseudomonas mendocina (strain ymp) (Pseudomonas mendocina), this protein is Protein ApaG.